A 363-amino-acid polypeptide reads, in one-letter code: Phosphoserine aminotransferase (363 aa).

Arg42 lines the L-glutamate pocket. Pyridoxal 5'-phosphate-binding residues include Trp105, Thr155, Asp175, and Gln198. Lys199 bears the N6-(pyridoxal phosphate)lysine mark. 240–241 (NT) contacts pyridoxal 5'-phosphate.

This sequence belongs to the class-V pyridoxal-phosphate-dependent aminotransferase family. SerC subfamily. Homodimer. Pyridoxal 5'-phosphate serves as cofactor.

It is found in the cytoplasm. It carries out the reaction O-phospho-L-serine + 2-oxoglutarate = 3-phosphooxypyruvate + L-glutamate. It catalyses the reaction 4-(phosphooxy)-L-threonine + 2-oxoglutarate = (R)-3-hydroxy-2-oxo-4-phosphooxybutanoate + L-glutamate. It participates in amino-acid biosynthesis; L-serine biosynthesis; L-serine from 3-phospho-D-glycerate: step 2/3. Its pathway is cofactor biosynthesis; pyridoxine 5'-phosphate biosynthesis; pyridoxine 5'-phosphate from D-erythrose 4-phosphate: step 3/5. Functionally, catalyzes the reversible conversion of 3-phosphohydroxypyruvate to phosphoserine and of 3-hydroxy-2-oxo-4-phosphonooxybutanoate to phosphohydroxythreonine. The sequence is that of Phosphoserine aminotransferase from Herminiimonas arsenicoxydans.